Consider the following 180-residue polypeptide: Protein GrpE (180 aa).

It belongs to the GrpE family. In terms of assembly, homodimer.

Its subcellular location is the cytoplasm. In terms of biological role, participates actively in the response to hyperosmotic and heat shock by preventing the aggregation of stress-denatured proteins, in association with DnaK and GrpE. It is the nucleotide exchange factor for DnaK and may function as a thermosensor. Unfolded proteins bind initially to DnaJ; upon interaction with the DnaJ-bound protein, DnaK hydrolyzes its bound ATP, resulting in the formation of a stable complex. GrpE releases ADP from DnaK; ATP binding to DnaK triggers the release of the substrate protein, thus completing the reaction cycle. Several rounds of ATP-dependent interactions between DnaJ, DnaK and GrpE are required for fully efficient folding. The polypeptide is Protein GrpE (Picrophilus torridus (strain ATCC 700027 / DSM 9790 / JCM 10055 / NBRC 100828 / KAW 2/3)).